Consider the following 111-residue polypeptide: Carboxysome shell protein CcmK1 (111 aa).

Residues 4–90 enclose the BMC domain; it reads AVGMIETLGF…PHENLEYVLP (87 aa).

It belongs to the bacterial microcompartments protein family. CcmK subfamily. Homohexamer. Interacts with full-length CcmM. Forms mixed heterohexamers of all possible stoichiometries with CcmK2, which might form dodecamers. Only very weak interactions with CcmK3 and CcmK4 were seen. Interacts with CcmN and CcmO in the carboxysome.

The protein resides in the carboxysome. One of the shell proteins of the carboxysome, a polyhedral inclusion where RuBisCO (ribulose bisphosphate carboxylase, rbcL-rbcS) is sequestered. Assembles into hexamers which make sheets that form the facets of the polyhedral carboxysome. The hexamer central pore probably regulates metabolite flux. Functionally, probably the major shell protein of the carboxysome, a polyhedral inclusion where RuBisCO (ribulose bisphosphate carboxylase, rbcL-rbcS) is sequestered. The central pore probably regulates metabolite flux. Hexamers make sheets that form the facets of the carboxysome. The polypeptide is Carboxysome shell protein CcmK1 (Synechocystis sp. (strain ATCC 27184 / PCC 6803 / Kazusa)).